A 240-amino-acid chain; its full sequence is MAREKIQIRKIDNATARQVTFSKRRRGLFKKAEELSVLCDADVALIIFSSTGKLFEFCSSSMKEVLERHNLQSKNLEKLDQPSLELQLVENSDHARMSKEIADKSHRLRQMRGEELQGLDIEELQQLEKALETGLTRVIETKSDKIMSEISELQKKGMQLMDENKRLRQQGTQLTEENERLGMQICNNVHAHGGAESENAAVYEEGQSSESITNAGNSTGAPVDSESSDTSLRLGLPYGG.

An MADS-box domain is found at 3–57 (REKIQIRKIDNATARQVTFSKRRRGLFKKAEELSVLCDADVALIIFSSTGKLFEF). The K-box domain maps to 87-180 (QLVENSDHAR…GTQLTEENER (94 aa)). The segment at 202-240 (VYEEGQSSESITNAGNSTGAPVDSESSDTSLRLGLPYGG) is disordered. Over residues 206–220 (GQSSESITNAGNSTG) the composition is skewed to polar residues.

Forms a heterodimer with AP1 and SVP. Interacts with the SEU-LUG corepressor complex when complexed to AP1. Interacts with AGL15. Interacts with AGL16. Detected in roots and leaves. Expressed at very low levels in flowers and siliques. Present in floral meristems.

It is found in the nucleus. Functionally, transcription repressor that inhibit floral transition in the autonomous flowering pathway, independent of photoperiod and temperature. Acts in a dosage-dependent manner. Together with AGL24 and AP1, controls the identity of the floral meristem and regulates expression of class B, C and E genes. Promotes EFM expression to suppress flowering. In Arabidopsis thaliana (Mouse-ear cress), this protein is MADS-box protein SVP.